A 454-amino-acid polypeptide reads, in one-letter code: tRNA modification GTPase MnmE (454 aa).

The (6S)-5-formyl-5,6,7,8-tetrahydrofolate site is built by Arg-23, Glu-80, and Lys-120. A TrmE-type G domain is found at 216-377; the sequence is GMRVVIAGRP…VREHLKACIG (162 aa). Residue Asn-226 participates in K(+) binding. Residues 226-231, 245-251, 270-273, and 335-338 contribute to the GTP site; these read NAGKSS, TEIAGTT, DTAG, and NKAD. Ser-230 contacts Mg(2+). Thr-245, Ile-247, and Thr-250 together coordinate K(+). Thr-251 provides a ligand contact to Mg(2+). Lys-454 serves as a coordination point for (6S)-5-formyl-5,6,7,8-tetrahydrofolate.

The protein belongs to the TRAFAC class TrmE-Era-EngA-EngB-Septin-like GTPase superfamily. TrmE GTPase family. In terms of assembly, homodimer. Heterotetramer of two MnmE and two MnmG subunits. The cofactor is K(+).

The protein resides in the cytoplasm. Exhibits a very high intrinsic GTPase hydrolysis rate. Involved in the addition of a carboxymethylaminomethyl (cmnm) group at the wobble position (U34) of certain tRNAs, forming tRNA-cmnm(5)s(2)U34. This Pseudoalteromonas translucida (strain TAC 125) protein is tRNA modification GTPase MnmE.